We begin with the raw amino-acid sequence, 223 residues long: MKRTKSIHHASFRKSWSARHLTPVALAVTAVFMLAGCEKSDETVSLYQNADDCSAANPGKSAECTTAYNNALKEAERTAPKYATREDCVAEFGEGQCQQAPAQAGMAPENQAQAQQSSGSFWMPLMAGYMMGRLMGGGAGFAQQPLFSSKNPASPAYGKYTDAAGKNYGAAQPGRTMTVPKTAMAPKPATTTTVTRGGFGESVAKQSAMQRSAAGTSTRSMGG.

The tract at residues 201 to 223 is disordered; it reads ESVAKQSAMQRSAAGTSTRSMGG. Over residues 204–223 the composition is skewed to polar residues; the sequence is AKQSAMQRSAAGTSTRSMGG.

Belongs to the UPF0441 family.

The sequence is that of UPF0441 protein YgiB from Salmonella arizonae (strain ATCC BAA-731 / CDC346-86 / RSK2980).